Reading from the N-terminus, the 203-residue chain is Recombination protein RecR (203 aa).

The C4-type zinc finger occupies 56–71 (CSVCGNVSDEERCRIC). Positions 79–179 (SLVCVVEEPK…TVTRIASGLP (101 aa)) constitute a Toprim domain.

This sequence belongs to the RecR family.

May play a role in DNA repair. It seems to be involved in an RecBC-independent recombinational process of DNA repair. It may act with RecF and RecO. This is Recombination protein RecR from Mycolicibacterium smegmatis (strain ATCC 700084 / mc(2)155) (Mycobacterium smegmatis).